A 1047-amino-acid polypeptide reads, in one-letter code: Atrial natriuretic peptide receptor 2 (1047 aa).

The N-terminal stretch at 1–16 (MALPSLLLVVAALAGG) is a signal peptide. At 17 to 458 (VRPPGARNLT…DKTPLSTLAI (442 aa)) the chain is on the extracellular side. N-linked (GlcNAc...) asparagine glycosylation is found at Asn24 and Asn35. A disulfide bridge links Cys75 with Cys101. N-linked (GlcNAc...) asparagine glycosylation is found at Asn161, Asn195, Asn244, Asn277, and Asn349. A helical membrane pass occupies residues 459 to 478 (VALGTGITFIMFGVSSFLIF). The Cytoplasmic portion of the chain corresponds to 479 to 1047 (RKLMLEKELA…GERKGPPGLL (569 aa)). Ser513 carries the post-translational modification Phosphoserine. The 274-residue stretch at 513 to 786 (SRLTLSLRGS…PDFGQIKGFI (274 aa)) folds into the Protein kinase domain. Residue Thr516 is modified to Phosphothreonine. Phosphoserine occurs at positions 518, 522, 523, and 526. At Thr529 the chain carries Phosphothreonine. A Guanylate cyclase domain is found at 861–991 (TIYFSDIVGF…DTVNTASRME (131 aa)).

The protein belongs to the adenylyl cyclase class-4/guanylyl cyclase family. Phosphorylated. Phosphorylation of the protein kinase-like domain is required for full activation by CNP. In terms of processing, glycosylated.

Its subcellular location is the cell membrane. It catalyses the reaction GTP = 3',5'-cyclic GMP + diphosphate. Receptor for the C-type natriuretic peptide NPPC/CNP hormone. Has guanylate cyclase activity upon binding of its ligand. May play a role in the regulation of skeletal growth. In Rattus norvegicus (Rat), this protein is Atrial natriuretic peptide receptor 2 (Npr2).